We begin with the raw amino-acid sequence, 225 residues long: UPF0758 protein Shew185_0376 (225 aa).

In terms of domain architecture, MPN spans V102–I224. Zn(2+) is bound by residues H173, H175, and D186. The JAMM motif motif lies at H173–D186.

It belongs to the UPF0758 family.

This chain is UPF0758 protein Shew185_0376, found in Shewanella baltica (strain OS185).